The primary structure comprises 227 residues: Fibrillarin-like rRNA/tRNA 2'-O-methyltransferase (227 aa).

S-adenosyl-L-methionine-binding positions include 82–83 (TT), 100–101 (EF), 125–126 (DA), and 145–148 (DVAQ).

The protein belongs to the methyltransferase superfamily. Fibrillarin family. In terms of assembly, interacts with nop5. Component of box C/D small ribonucleoprotein (sRNP) particles that contain rpl7ae, FlpA and nop5, plus a guide RNA.

Involved in pre-rRNA and tRNA processing. Utilizes the methyl donor S-adenosyl-L-methionine to catalyze the site-specific 2'-hydroxyl methylation of ribose moieties in rRNA and tRNA. Site specificity is provided by a guide RNA that base pairs with the substrate. Methylation occurs at a characteristic distance from the sequence involved in base pairing with the guide RNA. The sequence is that of Fibrillarin-like rRNA/tRNA 2'-O-methyltransferase from Methanosarcina mazei (strain ATCC BAA-159 / DSM 3647 / Goe1 / Go1 / JCM 11833 / OCM 88) (Methanosarcina frisia).